The following is a 274-amino-acid chain: Cytochrome b-c1 complex subunit Rieske, mitochondrial (274 aa).

The Mitochondrial matrix portion of the chain corresponds to 79–103 (SHTDVKVPDFYDYRRLEVLDSTKSS). Residues 104–140 (RESSEARKGFSYLVTAVTTVGVAYAAKNVVTQFISSM) form a helical membrane-spanning segment. The Mitochondrial intermembrane segment spans residues 141-274 (SASADVLAMA…FTGDDVVVVG (134 aa)). The Rieske domain maps to 187–272 (EAAVELSQLR…YEFTGDDVVV (86 aa)). Residues Cys-217, His-219, Cys-236, His-239, and Ser-241 each coordinate [2Fe-2S] cluster. Cys-222 and Cys-238 are disulfide-bonded.

This sequence belongs to the Rieske iron-sulfur protein family. In terms of assembly, component of the ubiquinol-cytochrome c oxidoreductase (cytochrome b-c1 complex, complex III, CIII), a multisubunit enzyme composed of 11 subunits. The complex is composed of 3 respiratory subunits cytochrome b, cytochrome c1 and Rieske protein UQCRFS1, 2 core protein subunits UQCRC1/QCR1 and UQCRC2/QCR2, and 6 low-molecular weight protein subunits UQCRH/QCR6, UQCRB/QCR7, UQCRQ/QCR8, UQCR10/QCR9, UQCR11/QCR10 and subunit 9, the cleavage product of Rieske protein UQCRFS1. The complex exists as an obligatory dimer and forms supercomplexes (SCs) in the inner mitochondrial membrane with NADH-ubiquinone oxidoreductase (complex I, CI) and cytochrome c oxidase (complex IV, CIV), resulting in different assemblies (supercomplex SCI(1)III(2)IV(1) and megacomplex MCI(2)III(2)IV(2)). Incorporation of the Rieske protein UQCRFS1 is the penultimate step in complex III assembly. Interacts with TTC19, which is involved in the clearance of UQCRFS1 fragments. As to quaternary structure, component of the ubiquinol-cytochrome c oxidoreductase (cytochrome b-c1 complex, complex III, CIII). Subunit 9 corresponds to the mitochondrial targeting sequence (MTS) of Rieske protein UQCRFS1. It is retained after processing and incorporated inside complex III, where it remains bound to the complex and localizes between the 2 core subunits UQCRC1/QCR1 and UQCRC2/QCR2. [2Fe-2S] cluster serves as cofactor. Post-translationally, proteolytic processing is necessary for the correct insertion of UQCRFS1 in the complex III dimer. Several fragments are generated during UQCRFS1 insertion, most probably due to the endogenous matrix-processing peptidase (MPP) activity of the 2 core protein subunits UQCRC1/QCR1 and UQCRC2/QCR2, which are homologous to the 2 mitochondrial-processing peptidase (MPP) subunits beta-MPP and alpha-MPP respectively. The action of the protease is also necessary for the clearance of the UQCRFS1 fragments.

It is found in the mitochondrion inner membrane. It catalyses the reaction a quinol + 2 Fe(III)-[cytochrome c](out) = a quinone + 2 Fe(II)-[cytochrome c](out) + 2 H(+)(out). Functionally, component of the ubiquinol-cytochrome c oxidoreductase, a multisubunit transmembrane complex that is part of the mitochondrial electron transport chain which drives oxidative phosphorylation. The respiratory chain contains 3 multisubunit complexes succinate dehydrogenase (complex II, CII), ubiquinol-cytochrome c oxidoreductase (cytochrome b-c1 complex, complex III, CIII) and cytochrome c oxidase (complex IV, CIV), that cooperate to transfer electrons derived from NADH and succinate to molecular oxygen, creating an electrochemical gradient over the inner membrane that drives transmembrane transport and the ATP synthase. The cytochrome b-c1 complex catalyzes electron transfer from ubiquinol to cytochrome c, linking this redox reaction to translocation of protons across the mitochondrial inner membrane, with protons being carried across the membrane as hydrogens on the quinol. In the process called Q cycle, 2 protons are consumed from the matrix, 4 protons are released into the intermembrane space and 2 electrons are passed to cytochrome c. The Rieske protein is a catalytic core subunit containing a [2Fe-2S] iron-sulfur cluster. It cycles between 2 conformational states during catalysis to transfer electrons from the quinol bound in the Q(0) site in cytochrome b to cytochrome c1. Incorporation of UQCRFS1 is the penultimate step in complex III assembly. Component of the ubiquinol-cytochrome c oxidoreductase (cytochrome b-c1 complex, complex III, CIII). UQCRFS1 undergoes proteolytic processing once it is incorporated in the complex III dimer. One of the fragments, called subunit 9, corresponds to its mitochondrial targeting sequence (MTS). The proteolytic processing is necessary for the correct insertion of UQCRFS1 in the complex III dimer, but the persistence of UQCRFS1-derived fragments may prevent newly imported UQCRFS1 to be processed and assembled into complex III and is detrimental for the complex III structure and function. The polypeptide is Cytochrome b-c1 complex subunit Rieske, mitochondrial (UQCRFS1) (Chlorocebus aethiops (Green monkey)).